A 467-amino-acid chain; its full sequence is Mitochondrial adenyl nucleotide antiporter SLC25A23 (467 aa).

A regulatory N-terminal domain region spans residues 1 to 148; that stretch reads MRGGSSDAER…DHFLLHSLEN (148 aa). Topologically, residues 1–187 are mitochondrial intermembrane; that stretch reads MRGGSSDAER…EKLTGMWWKQ (187 aa). EF-hand domains lie at 9–44, 76–111, and 112–147; these read ERRQRWGRLFEELDSNKDGRVDVHELRQGLARLGRG, EREQRLLLMFHSLDRNQDGHIDVSEIQQSFRALGIS, and ISLEQAEKILHSMDRDGTMTIDWQEWRDHFLLHSLE. Ca(2+)-binding residues include Asp-22, Asn-24, Asp-26, Arg-28, and Glu-33. Positions 39–61 are disordered; that stretch reads ARLGRGDPDRAQQGVSSDWDADP. Ca(2+)-binding residues include Asp-89, Asn-91, Asp-93, His-95, and Glu-100. The interval 149–158 is linker region; it reads VEDVLYFWKH. The tract at residues 164-467 is C-terminal transmembrane transporter domain; the sequence is IGECLTVPDE…MKQALGVTSR (304 aa). 3 Solcar repeats span residues 182–268, 276–361, and 373–461; these read GMWW…IKRA, LHVQ…LKNR, and PGIL…MKQA. Residues 188–205 form a helical membrane-spanning segment; it reads LVAGAVAGAVSRTGTAPL. The Mitochondrial matrix segment spans residues 206–242; sequence DRLKVFMQVHASKSNRLNILGGLRNMIQEGGVLSLWR. The helical transmembrane segment at 243–262 threads the bilayer; the sequence is GNGINVLKIAPESAIKFMAY. Residues 263–285 lie on the Mitochondrial intermembrane side of the membrane; the sequence is EQIKRAIRGQQETLHVQERFVAG. The chain crosses the membrane as a helical span at residues 286 to 299; that stretch reads SLAGATAQTIIYPM. Topologically, residues 300–335 are mitochondrial matrix; that stretch reads EVLKTRLTLRRTGQYKGLLDCAKRILEREGPRAFYR. Residues 336 to 355 traverse the membrane as a helical segment; the sequence is GYLPNVLGIIPYAGIDLAVY. Over 356-378 the chain is Mitochondrial intermembrane; it reads ETLKNRWLQQYSHESANPGILVL. A helical membrane pass occupies residues 379–396; sequence LGCGTISSTCGQIASYPL. Residues 397 to 435 lie on the Mitochondrial matrix side of the membrane; it reads ALVRTRMQAQASIEGGPQVSMVGLLRHILSQEGVWGLYR. Residues 436–455 traverse the membrane as a helical segment; the sequence is GIAPNFMKVIPAVSISYVVY. Topologically, residues 456 to 467 are mitochondrial intermembrane; sequence ENMKQALGVTSR.

This sequence belongs to the mitochondrial carrier (TC 2.A.29) family. Interacts with MCU. Interacts with MICU1.

It is found in the mitochondrion inner membrane. It catalyses the reaction Mg(2+)(out) + phosphate(in) + ATP(out) = Mg(2+)(in) + phosphate(out) + ATP(in). It carries out the reaction ADP(out) + phosphate(in) + H(+)(out) = ADP(in) + phosphate(out) + H(+)(in). The enzyme catalyses AMP(out) + phosphate(in) = AMP(in) + phosphate(out). The catalysed reaction is phosphate(in) + ATP(out) + 2 H(+)(out) = phosphate(out) + ATP(in) + 2 H(+)(in). It catalyses the reaction dADP(in) + ADP(out) = dADP(out) + ADP(in). It carries out the reaction Mg(2+)(in) + ADP(out) + ATP(in) + H(+)(out) = Mg(2+)(out) + ADP(in) + ATP(out) + H(+)(in). The enzyme catalyses ADP(out) + diphosphate(in) = ADP(in) + diphosphate(out). The catalysed reaction is dAMP(in) + ADP(out) + H(+)(out) = dAMP(out) + ADP(in) + H(+)(in). It catalyses the reaction 3'-AMP(in) + ADP(out) + H(+)(out) = 3'-AMP(out) + ADP(in) + H(+)(in). It carries out the reaction dAMP(out) + phosphate(in) = dAMP(in) + phosphate(out). The enzyme catalyses 3'-AMP(out) + phosphate(in) = 3'-AMP(in) + phosphate(out). The catalysed reaction is dADP(out) + phosphate(in) + H(+)(out) = dADP(in) + phosphate(out) + H(+)(in). Its activity is regulated as follows. Activated by an increase in cytosolic calcium levels that induce a conformational change of the N-terminal regulatory domain, uncapping the channel and allowing transport. Electroneutral antiporter that mediates the transport of adenine nucleotides through the inner mitochondrial membrane. Originally identified as an ATP-magnesium/inorganic phosphate antiporter, it also acts as a broad specificity adenyl nucleotide antiporter. By regulating the mitochondrial matrix adenine nucleotide pool could adapt to changing cellular energetic demands and indirectly regulate adenine nucleotide-dependent metabolic pathways. Also acts as a regulator of mitochondrial calcium uptake and can probably transport trace amounts of other divalent metal cations in complex with ATP. In vitro, a low activity is also observed with guanyl and pyrimidine nucleotides. In Mus musculus (Mouse), this protein is Mitochondrial adenyl nucleotide antiporter SLC25A23.